Reading from the N-terminus, the 344-residue chain is Phosphoribosylformylglycinamidine cyclo-ligase (344 aa).

It belongs to the AIR synthase family.

The protein localises to the cytoplasm. The catalysed reaction is 2-formamido-N(1)-(5-O-phospho-beta-D-ribosyl)acetamidine + ATP = 5-amino-1-(5-phospho-beta-D-ribosyl)imidazole + ADP + phosphate + H(+). Its pathway is purine metabolism; IMP biosynthesis via de novo pathway; 5-amino-1-(5-phospho-D-ribosyl)imidazole from N(2)-formyl-N(1)-(5-phospho-D-ribosyl)glycinamide: step 2/2. This Anaeromyxobacter sp. (strain Fw109-5) protein is Phosphoribosylformylglycinamidine cyclo-ligase.